Consider the following 253-residue polypeptide: MICOS complex subunit mic25 (253 aa).

A disordered region spans residues 1 to 89 (MGGSESTGRK…GAHKPTAAGV (89 aa)). Gly2 carries N-myristoyl glycine lipidation. Over residues 28–44 (RLSDEVVNRMKDSDLPS) the composition is skewed to basic and acidic residues. Positions 48 to 64 (STSAASGTASAPAAFPS) are enriched in low complexity. Positions 94–178 (AEEDLYRRYE…EQLSSIEKKN (85 aa)) form a coiled coil. The region spanning 206 to 248 (DPVCMNLQADILKCYSENKQERLNCSNLAKEYRKCVSAAQKNL) is the CHCH domain. Short sequence motifs (cx9C motif) lie at residues 209-219 (CMNLQADILKC) and 230-240 (CSNLAKEYRKC). Intrachain disulfides connect Cys209–Cys240 and Cys219–Cys230.

It belongs to the MICOS complex subunit Mic19 family. Metazoan Mic25 subfamily. As to quaternary structure, component of the mitochondrial contact site and cristae organizing system (MICOS) complex (also known as MINOS or MitOS complex).

It is found in the mitochondrion inner membrane. Functionally, component of the MICOS complex, a large protein complex of the mitochondrial inner membrane that plays crucial roles in the maintenance of crista junctions, inner membrane architecture, and formation of contact sites to the outer membrane. This Xenopus tropicalis (Western clawed frog) protein is MICOS complex subunit mic25 (chchd6).